Consider the following 370-residue polypeptide: MHLESIVLRNFRNYENLELEFSPSVNVFLGENAQGKTNLLEAVLMLALAKSHRTTNDKDFIMWEKEEAKMEGRVVKRGQTVPLELAITQKGKRAKVNHLEQKKLSQYVGNLNVVIFAPEDLSLVKGAPGIRRRFLNMEIGQMQPIYLHNLSEYQRILQQRNQYLKMLQMKRKVDPMLLDILTEQFADVAINLTKRRADFIQKLEAYAAPIHHQISRGLETLKIEYKASVTLNGDDPDTWKADLLQKMESIKQREIDRGVTLVGPHRDDSLFYINGQNVQDFGSQGQQRTTALSVKLAEIDLIHEETGEYPVLLLDDVLSELDDYRQSHLLGAIEGKVQTFVTTTSTSGIDHDTLKQATTFYVEKGTVKKS.

30-37 (GENAQGKT) serves as a coordination point for ATP.

Belongs to the RecF family.

The protein localises to the cytoplasm. The RecF protein is involved in DNA metabolism; it is required for DNA replication and normal SOS inducibility. RecF binds preferentially to single-stranded, linear DNA. It also seems to bind ATP. This chain is DNA replication and repair protein RecF, found in Listeria welshimeri serovar 6b (strain ATCC 35897 / DSM 20650 / CCUG 15529 / CIP 8149 / NCTC 11857 / SLCC 5334 / V8).